The chain runs to 489 residues: Betaine aldehyde dehydrogenase (489 aa).

K(+) is bound by residues T26 and D93. 150–152 (GAW) provides a ligand contact to NAD(+). The active-site Charge relay system is the K162. 176-179 (KPSE) lines the NAD(+) pocket. Residue V180 participates in K(+) binding. 229-232 (GVET) contributes to the NAD(+) binding site. L245 is a K(+) binding site. Catalysis depends on E251, which acts as the Proton acceptor. Residues G253, C285, and E386 each coordinate NAD(+). C285 (nucleophile) is an active-site residue. Cysteine sulfenic acid (-SOH) is present on C285. The K(+) site is built by K456 and G459. E463 acts as the Charge relay system in catalysis.

This sequence belongs to the aldehyde dehydrogenase family. As to quaternary structure, dimer of dimers. Requires K(+) as cofactor.

The catalysed reaction is betaine aldehyde + NAD(+) + H2O = glycine betaine + NADH + 2 H(+). The protein operates within amine and polyamine biosynthesis; betaine biosynthesis via choline pathway; betaine from betaine aldehyde: step 1/1. Involved in the biosynthesis of the osmoprotectant glycine betaine. Catalyzes the irreversible oxidation of betaine aldehyde to the corresponding acid. The protein is Betaine aldehyde dehydrogenase of Burkholderia ambifaria (strain ATCC BAA-244 / DSM 16087 / CCUG 44356 / LMG 19182 / AMMD) (Burkholderia cepacia (strain AMMD)).